The chain runs to 1187 residues: Trafficking protein particle complex II-specific subunit 120 homolog (1187 aa).

Positions 1037–1059 (GTTAKTDSSKEPGDGSSRSADES) are disordered.

It belongs to the TRS120 family. Part of the multisubunit TRAPP (transport protein particle) II complex composed of BET3, BET5, TRS20, TRS23, TRS31, TRS33, TRS65, TRS85, TRS120 and TRS130.

The protein localises to the golgi apparatus. Its subcellular location is the trans-Golgi network. The protein resides in the early endosome. Functionally, specific subunit of the TRAPP II complex, a highly conserved vesicle tethering complex that is required for the proper transport of proteins in post-Golgi trafficking pathways to the growing cell plate in mitotic active cells. The polypeptide is Trafficking protein particle complex II-specific subunit 120 homolog (Oryza sativa subsp. japonica (Rice)).